The following is a 231-amino-acid chain: F-box protein SKIP8 (231 aa).

The disordered stretch occupies residues 1–24 (MPSTPLANGGTPPMGGGERTTVTT). An F-box domain is found at 34-80 (VSMMEQLVPEITTHALSYLDYPSLCRLSMTNSLMRKAANDDNAWKAL).

Part of a SCF (ASK-cullin-F-box) protein ligase complex. Interacts with SKP1A/ASK1.

The protein operates within protein modification; protein ubiquitination. Component of SCF(ASK-cullin-F-box) E3 ubiquitin ligase complexes, which may mediate the ubiquitination and subsequent proteasomal degradation of target proteins. This Arabidopsis thaliana (Mouse-ear cress) protein is F-box protein SKIP8 (SKIP8).